Reading from the N-terminus, the 388-residue chain is Phosphopentomutase (388 aa).

Mn(2+) contacts are provided by aspartate 10, aspartate 282, histidine 287, aspartate 323, histidine 324, and histidine 335.

This sequence belongs to the phosphopentomutase family. It depends on Mn(2+) as a cofactor.

It is found in the cytoplasm. The catalysed reaction is 2-deoxy-alpha-D-ribose 1-phosphate = 2-deoxy-D-ribose 5-phosphate. It catalyses the reaction alpha-D-ribose 1-phosphate = D-ribose 5-phosphate. It functions in the pathway carbohydrate degradation; 2-deoxy-D-ribose 1-phosphate degradation; D-glyceraldehyde 3-phosphate and acetaldehyde from 2-deoxy-alpha-D-ribose 1-phosphate: step 1/2. Functionally, isomerase that catalyzes the conversion of deoxy-ribose 1-phosphate (dRib-1-P) and ribose 1-phosphate (Rib-1-P) to deoxy-ribose 5-phosphate (dRib-5-P) and ribose 5-phosphate (Rib-5-P), respectively. The polypeptide is Phosphopentomutase (Desulfitobacterium hafniense (strain DSM 10664 / DCB-2)).